Consider the following 245-residue polypeptide: MANEANPCPCDIGHKLEYGGMGHEVQVEHIKAYVTRSPVDAGKAVIVVQDIFGWQLPNTRYMADMIARNGYTTIVPDFFVGQEPWDPAGDWSTFPAWLKSRNARKVNREVDAVLRYLRQQCHAQKIGIVGFCWGGVVVHQVMTAYPDIRAGVSVYGIIRDSEDVYNLKNPTLFIFAENDTVIPLEQVSTLTQKLKEHCIVNYQVKTFSGQTHGFVHRKREDCSPADKPYIEEARRNLIEWLNKYV.

A2 bears the N-acetylalanine mark. Catalysis depends on residues C132, D179, and H212. At S223 the chain carries Phosphoserine.

This sequence belongs to the dienelactone hydrolase family.

The protein resides in the cytoplasm. Its subcellular location is the cytosol. Its function is as follows. Cysteine hydrolase. The protein is Carboxymethylenebutenolidase homolog (Cmbl) of Mus musculus (Mouse).